Reading from the N-terminus, the 366-residue chain is RISC-loading complex subunit TARBP2 (366 aa).

3 sufficient for interaction with PRKRA regions span residues 22–105 (MLAA…EPAL), 152–234 (SPQQ…DARD), and 287–366 (LGAL…AGSK). One can recognise a DRBM 1 domain in the interval 30 to 97 (TPISLLQEYG…AEVALKHLKG (68 aa)). Positions 135–158 (PSAVPTRSSPMEVQPPVSPQQSEC) are disordered. Ser-152 carries the post-translational modification Phosphoserine. 2 DRBM domains span residues 159-227 (NPVG…RVHT) and 293-361 (ACCS…YLKI). Residues 228–366 (VPLDARDGNE…QYLKIMAGSK (139 aa)) are sufficient for interaction with DICER1.

It belongs to the TARBP2 family. As to quaternary structure, self-associates. Component of the RISC loading complex (RLC), or micro-RNA (miRNA) loading complex (miRLC), which is composed of DICER1, AGO2 and TARBP2. Note that the trimeric RLC/miRLC is also referred to as RISC. Interacts with EIF2AK2/PKR and inhibits its protein kinase activity. Interacts with DHX9 and PRKRA. Interacts with DICER1, AGO2, MOV10, EIF6 and RPL7A (60S ribosome subunit); they form a large RNA-induced silencing complex (RISC). Interacts with IRF7; this interaction prevents IRF7 phosphorylation and activation.

It is found in the cytoplasm. The protein localises to the perinuclear region. It localises to the nucleus. Its function is as follows. Required for formation of the RNA induced silencing complex (RISC). Component of the RISC loading complex (RLC), also known as the micro-RNA (miRNA) loading complex (miRLC), which is composed of DICER1, AGO2 and TARBP2. Within the RLC/miRLC, DICER1 and TARBP2 are required to process precursor miRNAs (pre-miRNAs) to mature miRNAs and then load them onto AGO2. AGO2 bound to the mature miRNA constitutes the minimal RISC and may subsequently dissociate from DICER1 and TARBP2. May also play a role in the production of short interfering RNAs (siRNAs) from double-stranded RNA (dsRNA) by DICER1. Binds in vitro to the PRM1 3'-UTR. Seems to act as a repressor of translation. For some pre-miRNA substrates, may also alter the choice of cleavage site by DICER1. Negatively regulates IRF7-mediated IFN-beta signaling triggered by viral infection by inhibiting the phosphorylation of IRF7 and promoting its 'Lys'-48-linked ubiquitination and degradation. The sequence is that of RISC-loading complex subunit TARBP2 from Bos taurus (Bovine).